A 337-amino-acid polypeptide reads, in one-letter code: ATP-dependent 6-phosphofructokinase (337 aa).

Glycine 11 provides a ligand contact to ATP. 21-25 (RAVVR) contacts ADP. Residues 72 to 73 (RY) and 102 to 105 (GDGS) contribute to the ATP site. Aspartate 103 lines the Mg(2+) pocket. Position 125-127 (125-127 (TID)) interacts with substrate. Aspartate 127 functions as the Proton acceptor in the catalytic mechanism. Arginine 154 is an ADP binding site. Residues arginine 162 and 169 to 171 (MGR) each bind substrate. ADP-binding positions include 185 to 187 (GAD) and 214 to 216 (KNH). Substrate-binding positions include glutamate 223, arginine 245, and 251–254 (HILR).

Belongs to the phosphofructokinase type A (PFKA) family. ATP-dependent PFK group I subfamily. Prokaryotic clade 'B1' sub-subfamily. As to quaternary structure, homotetramer. Mg(2+) serves as cofactor.

It localises to the cytoplasm. The enzyme catalyses beta-D-fructose 6-phosphate + ATP = beta-D-fructose 1,6-bisphosphate + ADP + H(+). It participates in carbohydrate degradation; glycolysis; D-glyceraldehyde 3-phosphate and glycerone phosphate from D-glucose: step 3/4. Allosterically activated by ADP and other diphosphonucleosides, and allosterically inhibited by phosphoenolpyruvate. In terms of biological role, catalyzes the phosphorylation of D-fructose 6-phosphate to fructose 1,6-bisphosphate by ATP, the first committing step of glycolysis. This is ATP-dependent 6-phosphofructokinase from Streptococcus uberis (strain ATCC BAA-854 / 0140J).